The sequence spans 249 residues: Small ribosomal subunit protein uS2 (249 aa).

Belongs to the universal ribosomal protein uS2 family.

This chain is Small ribosomal subunit protein uS2, found in Acinetobacter baylyi (strain ATCC 33305 / BD413 / ADP1).